The primary structure comprises 230 residues: Large ribosomal subunit protein uL1 (230 aa).

It belongs to the universal ribosomal protein uL1 family. Part of the 50S ribosomal subunit.

Binds directly to 23S rRNA. The L1 stalk is quite mobile in the ribosome, and is involved in E site tRNA release. Its function is as follows. Protein L1 is also a translational repressor protein, it controls the translation of the L11 operon by binding to its mRNA. The sequence is that of Large ribosomal subunit protein uL1 from Leuconostoc citreum (strain KM20).